An 858-amino-acid polypeptide reads, in one-letter code: DNA mismatch repair protein MutS (858 aa).

Position 637–644 (637–644) interacts with ATP; that stretch reads GPNMAGKS.

The protein belongs to the DNA mismatch repair MutS family.

In terms of biological role, this protein is involved in the repair of mismatches in DNA. It is possible that it carries out the mismatch recognition step. This protein has a weak ATPase activity. The chain is DNA mismatch repair protein MutS from Protochlamydia amoebophila (strain UWE25).